A 437-amino-acid polypeptide reads, in one-letter code: Trigger factor (437 aa).

The 86-residue stretch at 163–248 (DDRVTVDFEG…VKKIEASHLP (86 aa)) folds into the PPIase FKBP-type domain.

This sequence belongs to the FKBP-type PPIase family. Tig subfamily.

It localises to the cytoplasm. It catalyses the reaction [protein]-peptidylproline (omega=180) = [protein]-peptidylproline (omega=0). Functionally, involved in protein export. Acts as a chaperone by maintaining the newly synthesized protein in an open conformation. Functions as a peptidyl-prolyl cis-trans isomerase. This Variovorax paradoxus (strain S110) protein is Trigger factor.